A 287-amino-acid polypeptide reads, in one-letter code: Phosphatidylserine decarboxylase proenzyme (287 aa).

Active-site charge relay system; for autoendoproteolytic cleavage activity residues include Asp-89, His-146, and Ser-252. Residue Ser-252 is the Schiff-base intermediate with substrate; via pyruvic acid; for decarboxylase activity of the active site. Pyruvic acid (Ser); by autocatalysis is present on Ser-252.

It belongs to the phosphatidylserine decarboxylase family. PSD-B subfamily. Prokaryotic type I sub-subfamily. As to quaternary structure, heterodimer of a large membrane-associated beta subunit and a small pyruvoyl-containing alpha subunit. The cofactor is pyruvate. In terms of processing, is synthesized initially as an inactive proenzyme. Formation of the active enzyme involves a self-maturation process in which the active site pyruvoyl group is generated from an internal serine residue via an autocatalytic post-translational modification. Two non-identical subunits are generated from the proenzyme in this reaction, and the pyruvate is formed at the N-terminus of the alpha chain, which is derived from the carboxyl end of the proenzyme. The autoendoproteolytic cleavage occurs by a canonical serine protease mechanism, in which the side chain hydroxyl group of the serine supplies its oxygen atom to form the C-terminus of the beta chain, while the remainder of the serine residue undergoes an oxidative deamination to produce ammonia and the pyruvoyl prosthetic group on the alpha chain. During this reaction, the Ser that is part of the protease active site of the proenzyme becomes the pyruvoyl prosthetic group, which constitutes an essential element of the active site of the mature decarboxylase.

It localises to the cell membrane. It catalyses the reaction a 1,2-diacyl-sn-glycero-3-phospho-L-serine + H(+) = a 1,2-diacyl-sn-glycero-3-phosphoethanolamine + CO2. It functions in the pathway phospholipid metabolism; phosphatidylethanolamine biosynthesis; phosphatidylethanolamine from CDP-diacylglycerol: step 2/2. Functionally, catalyzes the formation of phosphatidylethanolamine (PtdEtn) from phosphatidylserine (PtdSer). This chain is Phosphatidylserine decarboxylase proenzyme, found in Shewanella pealeana (strain ATCC 700345 / ANG-SQ1).